A 374-amino-acid polypeptide reads, in one-letter code: uncharacterized protein (374 aa).

29–36 is an ATP binding site; sequence GSLNSGKS.

It belongs to the archaeal ATPase family.

This is an uncharacterized protein from Methanocaldococcus jannaschii (strain ATCC 43067 / DSM 2661 / JAL-1 / JCM 10045 / NBRC 100440) (Methanococcus jannaschii).